Here is a 1152-residue protein sequence, read N- to C-terminus: Autotransporter adhesin BpaC (1152 aa).

An N-terminal signal peptide occupies residues methionine 1–asparagine 71. The interval asparagine 72–glycine 1061 is surface exposed passenger domain. 2 disordered regions span residues glycine 420–threonine 886 and threonine 900–alanine 949. A compositionally biased stretch (polar residues) spans alanine 427–aspartate 442. Low complexity predominate over residues asparagine 443–glycine 504. Residues aspartate 505 to glutamate 519 are compositionally biased toward polar residues. Low complexity predominate over residues asparagine 520–glycine 588. Positions aspartate 589–glutamate 603 are enriched in polar residues. Over residues asparagine 604–glycine 630 the composition is skewed to low complexity. Residues aspartate 631–glutamate 645 are compositionally biased toward polar residues. Positions asparagine 646–glycine 672 are enriched in low complexity. The span at aspartate 673–glutamate 687 shows a compositional bias: polar residues. Positions asparagine 688–glycine 714 are enriched in low complexity. Positions aspartate 715 to glutamate 729 are enriched in polar residues. Low complexity predominate over residues asparagine 730 to glycine 756. The span at aspartate 757 to glutamate 771 shows a compositional bias: polar residues. Composition is skewed to low complexity over residues asparagine 772–glycine 840 and threonine 848–threonine 886. Residues isoleucine 1062–glycine 1099 are outer membrane translocation of the passenger domain. A translocator domain region spans residues lysine 1100–tryptophan 1152.

Belongs to the autotransporter-2 (AT-2) (TC 1.B.40) family. Homotrimer.

The protein resides in the cell surface. It is found in the cell outer membrane. Its function is as follows. Involved in virulence. Mediates adherence to human respiratory epithelial cells. The chain is Autotransporter adhesin BpaC from Burkholderia pseudomallei (strain 1026b).